Reading from the N-terminus, the 225-residue chain is UPF0758 protein XOO0495 (225 aa).

In terms of domain architecture, MPN spans 102–224 (ALSDPPSVGR…PVSLAERGWL (123 aa)). Zn(2+) contacts are provided by His173, His175, and Asp186. The JAMM motif signature appears at 173–186 (HNHPSGNPEPSKAD).

This sequence belongs to the UPF0758 family.

The sequence is that of UPF0758 protein XOO0495 from Xanthomonas oryzae pv. oryzae (strain KACC10331 / KXO85).